The chain runs to 221 residues: UPF0502 protein CPS_0106 (221 aa).

This sequence belongs to the UPF0502 family.

The protein is UPF0502 protein CPS_0106 of Colwellia psychrerythraea (strain 34H / ATCC BAA-681) (Vibrio psychroerythus).